Reading from the N-terminus, the 1230-residue chain is Cullin-associated NEDD8-dissociated protein 1 (1230 aa).

Residue Ala-2 is modified to N-acetylalanine. HEAT repeat units lie at residues 2-39 (ASASYHISNLLEKMTSSDKDFRFMATNDLMTELQKDSI), 44-81 (DSERKVVKMILRLLEDKNGEVQNLAVKCLGPLVSKVKE), 83-119 (QVETIVDTLCTNMLSDKEQLRDISSIGLKTVIGELPP), 131-165 (CKKITGRLTSAIAKQEDVSVQLEALDIMADMLSRQ), 171-208 (NFHPSILTCLLPQLTSPRLAVRKRTIIALGHLVMSCGN), 210-247 (VFVDLIEHLLSELSKNDSMSTTRTYIQCIAAISRQAGH), 248-282 (RIGEYLEKIIPLVVKFCNVDDDELREYCIQAFESF), 289-366 (EVYP…TRHE), 370-407 (EFYKTVSPALIARFKEREENVKADVFHAYLSLLKQTRP), 424-467 (PLTM…VLPG), 471-510 (QHIPVLVPGIIFSLNDKSSSSNLKIDALSCLYVILCNHSP), and 515-552 (PHVQALVPPVVACVGDPFYKITSEALLVTQQLVKVIRP). The tract at residues 315-344 (DEDEDENAMDADGGDDDDQGSDDEYSDDDD) is disordered. At Ser-335 the chain carries Phosphoserine. Residue Ser-558 is modified to Phosphoserine. HEAT repeat units follow at residues 563-602 (PYIKDLFTCTIKRLKAADIDQEVKERAISCMGQIICNLGD), 606-643 (PDLSNTLQIFLERLKNEITRLTTVKALTLIAGSPLKID), 646-683 (PVLGEGVPILASFLRKNQRALKLGTLSALDILIKNYSD), 688-725 (AMIDAVLDELPPLISESDMHVSQMAISFLTTLAKVYPS), 729-768 (KISGSILNELIGLVRSPLLQGGALSAMLDFFQALVVTGTN), 770-808 (LGYMDLLRMLTGPVYSQSTALTHKQSYYSIAKCVAALTR), 809-845 (ACPKEGPAVVGQFIQDVKNSRSTDSIRLLALLSLGEV), 852-889 (SGQLELKSVILEAFSSPSEEVKSAASYALGSISVGNLP), 890-927 (EYLPFVLQEITSQPKRQYLLLHSLKEIISSASVAGLKP), 928-960 (YVENIWALLLKHCECAEEGTRNVVAECLGKLTL), 961-998 (IDPETLLPRLKGYLISGSSYARSSVVTAVKFTISDHPQ), 1002-1039 (PLLKNCIGDFLKTLEDPDLNVRRVALVTFNSAAHNKPS), 1043-1097 (DLLD…DSCL), 1099-1133 (RLDIFEFLNHVEDGLKDHYDIKMLTFLMLVRLSTL), and 1140-1189 (QRLD…IPEA). Lys-971 bears the N6-acetyllysine mark.

Belongs to the CAND family. As to quaternary structure, interacts with TBP. Part of a complex that contains CUL1 and RBX1. Interacts with unneddylated cullins: interacts with CUL1, CUL2, CUL3, CUL4A, CUL4B and CUL5. Does not bind neddylated CUL1. Interaction with cullins is abolished in presence of COMMD1, which antagonizes with CAND1 for interacting with cullins. Interacts with ERCC6. Interacts with DCUN1D1, DCUN1D2, DCUN1D3, DCUN1D4 and DCUN1D5; these interactions are bridged by cullins and strongly inhibits the neddylation of cullins.

The protein localises to the cytoplasm. The protein resides in the nucleus. Key assembly factor of SCF (SKP1-CUL1-F-box protein) E3 ubiquitin ligase complexes that promotes the exchange of the substrate-recognition F-box subunit in SCF complexes, thereby playing a key role in the cellular repertoire of SCF complexes. Acts as a F-box protein exchange factor. The exchange activity of CAND1 is coupled with cycles of neddylation conjugation: in the deneddylated state, cullin-binding CAND1 binds CUL1-RBX1, increasing dissociation of the SCF complex and promoting exchange of the F-box protein. Probably plays a similar role in other cullin-RING E3 ubiquitin ligase complexes. The protein is Cullin-associated NEDD8-dissociated protein 1 (Cand1) of Mus musculus (Mouse).